We begin with the raw amino-acid sequence, 139 residues long: Histone H2B (139 aa).

Positions 1–37 are enriched in low complexity; sequence MAPKSVASKAPASQASKAPAAASKAPAKAAKTSAAPK. A disordered region spans residues 1-48; sequence MAPKSVASKAPASQASKAPAAASKAPAKAAKTSAAPKDGAKKRSKKRV. Position 9 is an N6-acetyllysine; alternate (K9). Residue K9 forms a Glycyl lysine isopeptide (Lys-Gly) (interchain with G-Cter in SUMO); alternate linkage. Residue S13 is modified to Phosphoserine. At K17 the chain carries N6-acetyllysine. A Glycyl lysine isopeptide (Lys-Gly) (interchain with G-Cter in ubiquitin) cross-link involves residue K134.

Belongs to the histone H2B family. In terms of assembly, the nucleosome is a histone octamer containing two molecules each of H2A, H2B, H3 and H4 assembled in one H3-H4 heterotetramer and two H2A-H2B heterodimers. The octamer wraps approximately 147 bp of DNA. Post-translationally, monoubiquitinated by the UBC2-BRE1 complex to form H2BK123ub1. H2BK123ub1 gives a specific tag for epigenetic transcriptional activation and is also prerequisite for H3K4me and H3K79me formation. H2BK123ub1 also modulates the formation of double-strand breaks during meiosis and is a prerequisite for DNA-damage checkpoint activation. Phosphorylated to form H2BS10ph during progression through meiotic prophase. May be correlated with chromosome condensation. In terms of processing, acetylation of N-terminal lysines and particularly formation of H2BK11ac has a positive effect on transcription. Post-translationally, sumoylation to form H2BK6su occurs preferentially near the telomeres and represses gene transcription.

The protein localises to the nucleus. It localises to the chromosome. Its function is as follows. Core component of nucleosome. Nucleosomes wrap and compact DNA into chromatin, limiting DNA accessibility to the cellular machineries which require DNA as a template. Histones thereby play a central role in transcription regulation, DNA repair, DNA replication and chromosomal stability. DNA accessibility is regulated via a complex set of post-translational modifications of histones, also called histone code, and nucleosome remodeling. The protein is Histone H2B (HTB1) of Cryptococcus neoformans var. neoformans serotype D (strain B-3501A) (Filobasidiella neoformans).